Here is a 208-residue protein sequence, read N- to C-terminus: Histone H1t (208 aa).

Over residues 1–12 the composition is skewed to polar residues; sequence MSETAPAASSTL. The segment at 1 to 39 is disordered; sequence MSETAPAASSTLVPAPVEKPATKRRGKKPGMATARKPRG. Residue serine 9 is modified to Phosphoserine. The H15 domain occupies 38 to 111; it reads RGFSVSKLIP…GASGSFKLSK (74 aa). Arginine 56 bears the Citrulline mark. Positions 93–208 are disordered; it reads GVLVQTKGTG…TDLRKAAGRK (116 aa). Residues 121–134 are compositionally biased toward basic residues; sequence KGKKSASAKAKKLG. Serine 141 bears the Phosphoserine mark. The segment covering 143–154 has biased composition (basic residues); that stretch reads KSSKTKVVKKPK. Residue threonine 156 is modified to Phosphothreonine. Phosphoserine occurs at positions 163, 178, and 187. Over residues 199–208 the composition is skewed to basic and acidic residues; that stretch reads TDLRKAAGRK.

The protein belongs to the histone H1/H5 family. Post-translationally, phosphorylated in early spermatids. Citrullination at Arg-56 (H1R54ci) by PADI4 takes place within the DNA-binding site of H1 and results in its displacement from chromatin and global chromatin decondensation, thereby promoting pluripotency and stem cell maintenance. Testis-specific. Expressed in pachytene spermatocytes during meiotic prophase I.

It is found in the nucleus. The protein localises to the chromosome. Functionally, testis-specific histone H1 that forms less compacted chromatin compared to other H1 histone subtypes. Formation of more relaxed chromatin may be required to promote chromatin architecture required for proper chromosome regulation during meiosis, such as homologous recombination. Histones H1 act as linkers that bind to nucleosomes and compact polynucleosomes into a higher-order chromatin configuration. The sequence is that of Histone H1t from Rattus norvegicus (Rat).